A 336-amino-acid polypeptide reads, in one-letter code: MTETTARSIPLQIVQGDSPSAAPLQAGVKQLGGDKINRSPVQFADAPVLRKPSWIRVRIPSGNAVQNLKAKLRENRLVTVCEEASCPNIHECFGHGTATFMILGEVCTRRCSFCDVAHGRPKPPDANEPASLGQTVADMGLKYVVVTSVDRDDLRDGGAQHFVDCITAIREKSPGTRIEVLTPDFRGKGRMERALEILAQNPPDVFNHNIETVPDLYRNVRPGADYQWSLNLLKNFKAQHPDVPTKSGIMLGLGEDFEQIKATLRDLRAHDVDMITIGQYLQPTAHHHPVLKYWTPEDYKALEDYGYELGFSHVASGPMVRSSYHADVQAKGAGVS.

[4Fe-4S] cluster contacts are provided by Cys81, Cys86, Cys92, Cys107, Cys111, Cys114, and Ser323. The Radical SAM core domain maps to 93-312; that stretch reads FGHGTATFMI…EDYGYELGFS (220 aa).

The protein belongs to the radical SAM superfamily. Lipoyl synthase family. The cofactor is [4Fe-4S] cluster.

It localises to the cytoplasm. The catalysed reaction is [[Fe-S] cluster scaffold protein carrying a second [4Fe-4S](2+) cluster] + N(6)-octanoyl-L-lysyl-[protein] + 2 oxidized [2Fe-2S]-[ferredoxin] + 2 S-adenosyl-L-methionine + 4 H(+) = [[Fe-S] cluster scaffold protein] + N(6)-[(R)-dihydrolipoyl]-L-lysyl-[protein] + 4 Fe(3+) + 2 hydrogen sulfide + 2 5'-deoxyadenosine + 2 L-methionine + 2 reduced [2Fe-2S]-[ferredoxin]. The protein operates within protein modification; protein lipoylation via endogenous pathway; protein N(6)-(lipoyl)lysine from octanoyl-[acyl-carrier-protein]: step 2/2. In terms of biological role, catalyzes the radical-mediated insertion of two sulfur atoms into the C-6 and C-8 positions of the octanoyl moiety bound to the lipoyl domains of lipoate-dependent enzymes, thereby converting the octanoylated domains into lipoylated derivatives. The polypeptide is Lipoyl synthase (Stenotrophomonas maltophilia (strain K279a)).